The primary structure comprises 208 residues: 2,3-bisphosphoglycerate-dependent phosphoglycerate mutase (208 aa).

Substrate-binding positions include 9–16 (RHGQSEWN), 22–23 (TG), Arg61, 88–91 (ERDY), Lys99, 115–116 (RR), and 159–160 (GN). His10 acts as the Tele-phosphohistidine intermediate in catalysis. Glu88 acts as the Proton donor/acceptor in catalysis.

Belongs to the phosphoglycerate mutase family. BPG-dependent PGAM subfamily. As to quaternary structure, homodimer.

The enzyme catalyses (2R)-2-phosphoglycerate = (2R)-3-phosphoglycerate. It participates in carbohydrate degradation; glycolysis; pyruvate from D-glyceraldehyde 3-phosphate: step 3/5. Functionally, catalyzes the interconversion of 2-phosphoglycerate and 3-phosphoglycerate. The protein is 2,3-bisphosphoglycerate-dependent phosphoglycerate mutase of Methylobacterium sp. (strain 4-46).